The chain runs to 641 residues: UvrABC system protein C (641 aa).

Residues 16–95 (ESPGVYRFWD…IKQYEPRFNI (80 aa)) enclose the GIY-YIG domain. Positions 208 to 243 (TEYLRRLEKDMRAAAAAEDFERAARLRDDAAALRLA) constitute a UVR domain.

The protein belongs to the UvrC family. In terms of assembly, interacts with UvrB in an incision complex.

The protein localises to the cytoplasm. The UvrABC repair system catalyzes the recognition and processing of DNA lesions. UvrC both incises the 5' and 3' sides of the lesion. The N-terminal half is responsible for the 3' incision and the C-terminal half is responsible for the 5' incision. The protein is UvrABC system protein C of Acidothermus cellulolyticus (strain ATCC 43068 / DSM 8971 / 11B).